Here is a 527-residue protein sequence, read N- to C-terminus: MRTVRQRWATGWGRALHTSGSAPAGSSAESALLPEMGQLDPKVAAAPRRKYLSAKYRVVGKLFQQAENGGYLAYRKPAALENPYLDVQARPRVDGATGQIVYQGTPRLSVTRLLTKQWCELRTAYDLYSNMPLFESKAMRIGKRAHRKLENKLHGASDAAATQALERLQLAVPVDPLHRLAADWAGAIDRMCTLFQKGEARELLCHGYISADHGAFVEGPVREDSDVLVSGVIDHLVLTQRGGGSPLSALQPERSLQFPSDMAELVPFLKDLGERRAAEWEVVVGDIKTRKYTQVPSQASVVETSRLQVMYYRRFLEDLGADVDKAYEKLLTNAQRRGLDVDAPLAAGSAISVMEGIPQLGADMLRLVRGDPIGFGPFDSYNRYAAHDTYDFTQHAALLQDQPELQKYAVFFGQWKTPFNLRFLAARMAQLYGCIAPLLSNTLLIEYYMGGECFHVNTFKYDAAELRKHCEDSARFWFGKREIEPIEPTIRNVNAYCKFCDYKDICLWRKEAVLGWKSLGEELRGLP.

The transit peptide at 1–23 directs the protein to the mitochondrion; the sequence is MRTVRQRWATGWGRALHTSGSAP. 4 residues coordinate [4Fe-4S] cluster: Cys-119, Cys-497, Cys-500, and Cys-506.

Belongs to the EXO5 family. As to quaternary structure, monomer. Requires Mg(2+) as cofactor. The cofactor is [4Fe-4S] cluster.

The protein resides in the mitochondrion. Single strand DNA specific 5' exonuclease involved in mitochondrial DNA replication and recombination. Releases dinucleotides as main products of catalysis. Has the capacity to slide across 5'double-stranded DNA or 5'RNA sequences and resumes cutting two nucleotides downstream of the double-stranded-to-single-stranded junction or RNA-to-DNA junction, respectively. The chain is Exonuclease V, mitochondrial (EXO5) from Eremothecium gossypii (strain ATCC 10895 / CBS 109.51 / FGSC 9923 / NRRL Y-1056) (Yeast).